We begin with the raw amino-acid sequence, 341 residues long: MNLSEELDSIYQEAIQKIGSSISEEDLDKNKNDFIGKKGKLTAVLKNVALLSIEEKKTIGQKANELSKKLENFVVETKSSLKKKLFETQAASEFFDSLRPLPNASNGSLHPITQIQYEIEDIFTSMGFSIMDGPEIETDTNNFGALNFTDDHPAREMQDTFYLENGNLLRTHTSAIQVRTLRKLKPPFRIIAPGRVFRYEEVDASHEHTFYQIEGMVVGKDISAANLIDTMQVLLSRIFEKEIKTRLRPGYFPFVEPGFELDINCLVCEGKGCPVCKQSGWLELLPCGLIHPNVLSHAGLDPKEWTGFAFGLGLDRLVMMRYGIHDIRYFQSGNLRFLKQF.

Glu256 contacts Mg(2+).

This sequence belongs to the class-II aminoacyl-tRNA synthetase family. Phe-tRNA synthetase alpha subunit type 1 subfamily. Tetramer of two alpha and two beta subunits. Requires Mg(2+) as cofactor.

It localises to the cytoplasm. It catalyses the reaction tRNA(Phe) + L-phenylalanine + ATP = L-phenylalanyl-tRNA(Phe) + AMP + diphosphate + H(+). This chain is Phenylalanine--tRNA ligase alpha subunit, found in Leptospira borgpetersenii serovar Hardjo-bovis (strain JB197).